The primary structure comprises 129 residues: MADITKDQVVEFISNMTVLELSEFITELEEKFGVSAAAPVAAVAAMPGAAGGEAAGGEEQTEFDVILKSAGGNKIAVIKAVRALTGLGLKEAKAKVDEAPAAIKEGVEKAEAEEALKQLEEAGAEAEMK.

This sequence belongs to the bacterial ribosomal protein bL12 family. In terms of assembly, homodimer. Part of the ribosomal stalk of the 50S ribosomal subunit. Forms a multimeric L10(L12)X complex, where L10 forms an elongated spine to which 2 to 4 L12 dimers bind in a sequential fashion. Binds GTP-bound translation factors.

In terms of biological role, forms part of the ribosomal stalk which helps the ribosome interact with GTP-bound translation factors. Is thus essential for accurate translation. The chain is Large ribosomal subunit protein bL12 from Maridesulfovibrio salexigens (strain ATCC 14822 / DSM 2638 / NCIMB 8403 / VKM B-1763) (Desulfovibrio salexigens).